We begin with the raw amino-acid sequence, 176 residues long: ATP-dependent protease subunit HslV (176 aa).

Thr-2 is an active-site residue. Na(+) is bound by residues Gly-157, Cys-160, and Thr-163.

This sequence belongs to the peptidase T1B family. HslV subfamily. As to quaternary structure, a double ring-shaped homohexamer of HslV is capped on each side by a ring-shaped HslU homohexamer. The assembly of the HslU/HslV complex is dependent on binding of ATP.

Its subcellular location is the cytoplasm. The catalysed reaction is ATP-dependent cleavage of peptide bonds with broad specificity.. Its activity is regulated as follows. Allosterically activated by HslU binding. Protease subunit of a proteasome-like degradation complex believed to be a general protein degrading machinery. The polypeptide is ATP-dependent protease subunit HslV (Salmonella agona (strain SL483)).